The sequence spans 114 residues: U-myrmeciitoxin(01)-Mg8a (114 aa).

The N-terminal stretch at 1–20 is a signal peptide; it reads MKLSTLLVAFVLLVITVILS. Residues 21–44 constitute a propeptide that is removed on maturation; that stretch reads TPSTNAKALAESNALAVAVSEAEP.

Belongs to the formicidae venom precursor-01 superfamily. Expressed by the venom gland.

The protein localises to the secreted. In terms of biological role, may have antimicrobial properties, like most ant linear peptides. This Myrmecia gulosa (Red bulldog ant) protein is U-myrmeciitoxin(01)-Mg8a.